The primary structure comprises 466 residues: uncharacterized protein (466 aa).

One can recognise a C2 NT-type domain in the interval N4–L199. Disordered regions lie at residues A262–I298, L374–M393, and E400–R452. A compositionally biased stretch (polar residues) spans T266 to I298. A phosphoserine mark is found at S433 and S439.

This sequence to S.pombe SpCC1494.08c.

This is an uncharacterized protein from Saccharomyces cerevisiae (strain ATCC 204508 / S288c) (Baker's yeast).